We begin with the raw amino-acid sequence, 100 residues long: Small ribosomal subunit protein uS14c (100 aa).

It belongs to the universal ribosomal protein uS14 family. As to quaternary structure, part of the 30S ribosomal subunit.

The protein resides in the plastid. Functionally, binds 16S rRNA, required for the assembly of 30S particles. The protein is Small ribosomal subunit protein uS14c of Epifagus virginiana (Beechdrops).